Consider the following 218-residue polypeptide: Grancalcin (218 aa).

4 consecutive EF-hand domains span residues 49–84 (SSAGDSVYTYFSAVAGQDGEVDAEELQRCLTQSGIS), 85–119 (GTYSPFSLETCRIMIAMLDRDYTGKMGFNAFKELW), 120–155 (SALNAWKENFMTVDQDGSGTVEHHELRQAIGLMGYR), and 156–191 (LSPQTLTTIVKRYSKNGRIFFDDYVACCVKLRALTD). 9 residues coordinate Ca(2+): D103, D105, T107, K109, D133, D135, S137, T139, and E144.

As to quaternary structure, homodimer. Interacts with SRI and LCP1.

It localises to the cytoplasm. The protein resides in the cytoplasmic granule membrane. In terms of biological role, calcium-binding protein that may play a role in the adhesion of neutrophils to fibronectin. May play a role in the formation of focal adhesions. This chain is Grancalcin (GCA), found in Pongo abelii (Sumatran orangutan).